The chain runs to 400 residues: Aspartate aminotransferase (400 aa).

L-aspartate is bound by residues G37, W126, and N176. At K238 the chain carries N6-(pyridoxal phosphate)lysine. R367 contacts L-aspartate.

This sequence belongs to the class-I pyridoxal-phosphate-dependent aminotransferase family. Homodimer. Requires pyridoxal 5'-phosphate as cofactor.

It localises to the cytoplasm. The enzyme catalyses L-aspartate + 2-oxoglutarate = oxaloacetate + L-glutamate. Functionally, catalyzes the reversible conversion of aspartate and 2-oxoglutarate to glutamate and oxaloacetate. Has very weak prephenate aminotransferase activity. In Musicola paradisiaca (strain Ech703) (Dickeya paradisiaca), this protein is Aspartate aminotransferase.